The following is a 102-amino-acid chain: uncharacterized protein (102 aa).

The next 2 membrane-spanning stretches (helical) occupy residues 33–55 (VLEL…LVVL) and 57–79 (VVGV…VVVA).

It is found in the membrane. This is an uncharacterized protein from Saccharomyces cerevisiae (strain ATCC 204508 / S288c) (Baker's yeast).